The chain runs to 237 residues: DNA repair protein RecO (237 aa).

This sequence belongs to the RecO family.

Involved in DNA repair and RecF pathway recombination. The polypeptide is DNA repair protein RecO (Rickettsia africae (strain ESF-5)).